A 149-amino-acid polypeptide reads, in one-letter code: Interleukin-2 (149 aa).

Positions 1-20 (MYRMQLLSCIALTLAVLANS) are cleaved as a signal peptide. O-linked (GalNAc...) threonine glycosylation is present at Thr23. Cys78 and Cys121 are oxidised to a cystine. A glycan (N-linked (GlcNAc...) asparagine) is linked at Asn106.

It belongs to the IL-2 family.

It localises to the secreted. Its function is as follows. Cytokine produced by activated CD4-positive helper T-cells and to a lesser extend activated CD8-positive T-cells and natural killer (NK) cells that plays pivotal roles in the immune response and tolerance. Binds to a receptor complex composed of either the high-affinity trimeric IL-2R (IL2RA/CD25, IL2RB/CD122 and IL2RG/CD132) or the low-affinity dimeric IL-2R (IL2RB and IL2RG). Interaction with the receptor leads to oligomerization and conformation changes in the IL-2R subunits resulting in downstream signaling starting with phosphorylation of JAK1 and JAK3. In turn, JAK1 and JAK3 phosphorylate the receptor to form a docking site leading to the phosphorylation of several substrates including STAT5. This process leads to activation of several pathways including STAT, phosphoinositide-3-kinase/PI3K and mitogen-activated protein kinase/MAPK pathways. Functions as a T-cell growth factor and can increase NK-cell cytolytic activity as well. Promotes strong proliferation of activated B-cells and subsequently immunoglobulin production. Plays a pivotal role in regulating the adaptive immune system by controlling the survival and proliferation of regulatory T-cells, which are required for the maintenance of immune tolerance. Moreover, participates in the differentiation and homeostasis of effector T-cell subsets, including Th1, Th2, Th17 as well as memory CD8-positive T-cells. The polypeptide is Interleukin-2 (IL2) (Equus caballus (Horse)).